The sequence spans 431 residues: Phosphate regulon sensor protein PhoR (431 aa).

The Cytoplasmic portion of the chain corresponds to Met-1–Arg-9. Residues Leu-10–Phe-28 form a helical membrane-spanning segment. Residues Gly-29–Pro-32 are Periplasmic-facing. A helical transmembrane segment spans residues Trp-33–Leu-51. The Cytoplasmic portion of the chain corresponds to Arg-52–Asp-431. In terms of domain architecture, PAS spans Leu-96–Gly-172. The Histidine kinase domain maps to Asn-210–Leu-425. His-213 is modified (phosphohistidine; by autocatalysis).

The protein localises to the cell inner membrane. It catalyses the reaction ATP + protein L-histidine = ADP + protein N-phospho-L-histidine.. Functionally, member of the two-component regulatory system PhoR/PhoB involved in the phosphate regulon genes expression. PhoR may function as a membrane-associated protein kinase that phosphorylates PhoB in response to environmental signals. The sequence is that of Phosphate regulon sensor protein PhoR (phoR) from Escherichia coli (strain K12).